A 252-amino-acid polypeptide reads, in one-letter code: MAYQMELGGESSPQRKAGRGKIEIKRIENTTNRQVTFCKRRNGLLKKAYELSVLCDAEVALIVFSSRGRLYEYSNNSVKGTIERYKKAISDNSNTGSVAEINAQYYQQESAKLRQQIISIQNSNRQLMGETIGSMSPKELRNLEGRLDRSVNRIRSKKNELLFAEIDYMQKREVDLHNDNQLLRAKIAENERNNPSMSLMPGGSNYEQIMPPPQTQPQPFDSRNYFQVAALQPNNHHYSSAGREDQTALQLV.

In terms of domain architecture, MADS-box spans 19–73; the sequence is RGKIEIKRIENTTNRQVTFCKRRNGLLKKAYELSVLCDAEVALIVFSSRGRLYEY. The 91-residue stretch at 103–193 folds into the K-box domain; that stretch reads AQYYQQESAK…RAKIAENERN (91 aa).

The protein localises to the nucleus. Its function is as follows. Probable transcription factor involved in regulating genes that determines stamen and carpel development in wild-type flowers. The protein is Floral homeotic protein AGAMOUS (AG1) of Brassica napus (Rape).